The chain runs to 1180 residues: DNA-directed RNA polymerase subunit beta' (1180 aa).

The Zn(2+) site is built by Cys-60, Cys-62, Cys-75, and Cys-78. Mg(2+) is bound by residues Asp-449, Asp-451, and Asp-453. Zn(2+) is bound by residues Cys-792, Cys-872, Cys-879, and Cys-882.

It belongs to the RNA polymerase beta' chain family. As to quaternary structure, the RNAP catalytic core consists of 2 alpha, 1 beta, 1 beta' and 1 omega subunit. When a sigma factor is associated with the core the holoenzyme is formed, which can initiate transcription. It depends on Mg(2+) as a cofactor. The cofactor is Zn(2+).

The catalysed reaction is RNA(n) + a ribonucleoside 5'-triphosphate = RNA(n+1) + diphosphate. Its function is as follows. DNA-dependent RNA polymerase catalyzes the transcription of DNA into RNA using the four ribonucleoside triphosphates as substrates. The protein is DNA-directed RNA polymerase subunit beta' of Heliobacterium modesticaldum (strain ATCC 51547 / Ice1).